A 229-amino-acid chain; its full sequence is Prolactin (229 aa).

The signal sequence occupies residues 1 to 30 (MDSKGSSQKGSRLLLLLVVSNLLLCQGVVS). Cys34 and Cys41 are joined by a disulfide. Ser56, Ser64, and Ser120 each carry phosphoserine. 2 disulfides stabilise this stretch: Cys88/Cys204 and Cys221/Cys229.

Belongs to the somatotropin/prolactin family. In terms of assembly, interacts with PRLR.

It localises to the secreted. Prolactin acts primarily on the mammary gland by promoting lactation. The protein is Prolactin (PRL) of Bos taurus (Bovine).